Consider the following 1367-residue polypeptide: Mediator of RNA polymerase II transcription subunit 23 (1367 aa).

The tract at residues 1343–1367 (PPQALNSGSPAPQSNQVPASLPVTQ) is disordered. Positions 1346-1367 (ALNSGSPAPQSNQVPASLPVTQ) are enriched in polar residues.

Belongs to the Mediator complex subunit 23 family. As to quaternary structure, component of the Mediator complex, which is composed of MED1, MED4, MED6, MED7, MED8, MED9, MED10, MED11, MED12, MED13, MED13L, MED14, MED15, MED16, MED17, MED18, MED19, MED20, MED21, MED22, MED23, MED24, MED25, MED26, MED27, MED29, MED30, MED31, CCNC, CDK8 and CDC2L6/CDK11. The MED12, MED13, CCNC and CDK8 subunits form a distinct module termed the CDK8 module. Mediator containing the CDK8 module is less active than Mediator lacking this module in supporting transcriptional activation. Individual preparations of the Mediator complex lacking one or more distinct subunits have been variously termed ARC, CRSP, DRIP, PC2, SMCC and TRAP. Interacts with CEBPB (when not methylated), CTNNB1, and GLI3. Interacts with CDK8 and ELK1.

Its subcellular location is the nucleus. Its function is as follows. Component of the Mediator complex, a coactivator involved in the regulated transcription of nearly all RNA polymerase II-dependent genes. Mediator functions as a bridge to convey information from gene-specific regulatory proteins to the basal RNA polymerase II transcription machinery. Mediator is recruited to promoters by direct interactions with regulatory proteins and serves as a scaffold for the assembly of a functional pre-initiation complex with RNA polymerase II and the general transcription factors. Also required for transcriptional activation subsequent to the assembly of the pre-initiation complex. Required for transcriptional activation by adenovirus E1A protein. Required for ELK1-dependent transcriptional activation in response to activated Ras signaling. The protein is Mediator of RNA polymerase II transcription subunit 23 (Med23) of Mus musculus (Mouse).